A 545-amino-acid polypeptide reads, in one-letter code: MAELSISPDEIRDALKDFVQSYEPGKASTTEVGYVLDAGDGIAHVQGLPGVMANELITFADGTLGLAQNLEESEIGVIVLGEFAGIEEGMEVRRTGEVLSVPVGDGYLGRVVDPLGNPIDGQGEIANEGRRALELQAPGVMQRKSVHEPMQTGIKAIDAMIPIGRGQRQLIIGDRQTGKTAIAIDTIINQKANWESGDTNKQVRCIYVAIGQKGSTIASVRGALEEAGAMEYTTIVASPASDPAGFKYLAPYTGSAIGQHWMYGGKHVLIIFDDLSKQAEAYRAVSLLLRRPPGREAYPGDVFYLHSRLLERCAKLSDELGAGSMTGLPIIETKANDVSAYIPTNVISITDGQIFLQSDLFNANQRPAVDVGISVSRVGGDAQVKSIKKVSGTLKLELAQYRSLEAFAIFASDLDAASRRQLARGARLTELLKQPQYSPFPIEEQVVSIWAGTKGKLDEVPVEDILRFERELLDHLHRNTEVLSQLKEKNVLTDDIIDAMDKAVDRFKLEFQTGEGKPLASVGSEKFEPAKAEDVNQEQIVKGKR.

173-180 (GDRQTGKT) contacts ATP.

Belongs to the ATPase alpha/beta chains family. F-type ATPases have 2 components, CF(1) - the catalytic core - and CF(0) - the membrane proton channel. CF(1) has five subunits: alpha(3), beta(3), gamma(1), delta(1), epsilon(1). CF(0) has three main subunits: a(1), b(2) and c(9-12). The alpha and beta chains form an alternating ring which encloses part of the gamma chain. CF(1) is attached to CF(0) by a central stalk formed by the gamma and epsilon chains, while a peripheral stalk is formed by the delta and b chains.

The protein localises to the cell membrane. It carries out the reaction ATP + H2O + 4 H(+)(in) = ADP + phosphate + 5 H(+)(out). Its function is as follows. Produces ATP from ADP in the presence of a proton gradient across the membrane. The alpha chain is a regulatory subunit. The chain is ATP synthase subunit alpha from Clavibacter sepedonicus (Clavibacter michiganensis subsp. sepedonicus).